The primary structure comprises 277 residues: Putative phosphoenolpyruvate synthase regulatory protein (277 aa).

An ADP-binding site is contributed by 157 to 164 (GVSRSGKT).

Belongs to the pyruvate, phosphate/water dikinase regulatory protein family. PSRP subfamily.

The enzyme catalyses [pyruvate, water dikinase] + ADP = [pyruvate, water dikinase]-phosphate + AMP + H(+). It carries out the reaction [pyruvate, water dikinase]-phosphate + phosphate + H(+) = [pyruvate, water dikinase] + diphosphate. Its function is as follows. Bifunctional serine/threonine kinase and phosphorylase involved in the regulation of the phosphoenolpyruvate synthase (PEPS) by catalyzing its phosphorylation/dephosphorylation. The polypeptide is Putative phosphoenolpyruvate synthase regulatory protein (Vibrio atlanticus (strain LGP32) (Vibrio splendidus (strain Mel32))).